Here is a 251-residue protein sequence, read N- to C-terminus: Hydroxyacylglutathione hydrolase (251 aa).

Zn(2+) contacts are provided by H53, H55, D57, H58, H110, D127, and H165.

The protein belongs to the metallo-beta-lactamase superfamily. Glyoxalase II family. As to quaternary structure, monomer. Zn(2+) is required as a cofactor.

It catalyses the reaction an S-(2-hydroxyacyl)glutathione + H2O = a 2-hydroxy carboxylate + glutathione + H(+). It functions in the pathway secondary metabolite metabolism; methylglyoxal degradation; (R)-lactate from methylglyoxal: step 2/2. Thiolesterase that catalyzes the hydrolysis of S-D-lactoyl-glutathione to form glutathione and D-lactic acid. This Escherichia coli O81 (strain ED1a) protein is Hydroxyacylglutathione hydrolase.